The following is a 166-amino-acid chain: Large ribosomal subunit protein uL10 (166 aa).

The protein belongs to the universal ribosomal protein uL10 family. Part of the ribosomal stalk of the 50S ribosomal subunit. The N-terminus interacts with L11 and the large rRNA to form the base of the stalk. The C-terminus forms an elongated spine to which L12 dimers bind in a sequential fashion forming a multimeric L10(L12)X complex.

Forms part of the ribosomal stalk, playing a central role in the interaction of the ribosome with GTP-bound translation factors. This chain is Large ribosomal subunit protein uL10, found in Ureaplasma parvum serovar 3 (strain ATCC 27815 / 27 / NCTC 11736).